We begin with the raw amino-acid sequence, 410 residues long: Bifunctional malic/malolactic enzyme (410 aa).

Tyr-36 functions as the Proton donor in the catalytic mechanism. Residue Lys-91 is the Proton acceptor of the active site. A divalent metal cation is bound by residues Glu-133, Asp-134, and Asp-159. Residues 192-195 (AGAA), Asn-286, and Asn-317 contribute to the NADP(+) site.

It belongs to the malic enzymes family. In terms of assembly, interacts with BrxC. It depends on Mg(2+) as a cofactor. Requires Mn(2+) as cofactor.

The catalysed reaction is (S)-malate + NADP(+) = pyruvate + CO2 + NADPH. It carries out the reaction oxaloacetate + H(+) = pyruvate + CO2. The enzyme catalyses (S)-malate + H(+) = (S)-lactate + CO2. NADPH is a strong modulator that switches activity from a pyruvate-producing malic enzyme to a lactate-generating malolactic enzyme. Functionally, bifunctional enzyme with both malic and malolactic enzyme activities. In the absence of NADPH, catalyzes the reversible decarboxylation of malate to pyruvate. Can use NAD and NADP, but with a very strong preference for NADP. In the presence of excess NADPH, catalyzes the non-oxidative decarboxylation of malate to lactate. During growth on glucose, contributes to NADPH balancing via oxidation of the NADPH produced in excess by other enzymatic reactions. Can also catalyze the decarboxylation of oxaloacetate. In Bacillus subtilis (strain 168), this protein is Bifunctional malic/malolactic enzyme (ytsJ).